A 100-amino-acid polypeptide reads, in one-letter code: Putative septation protein SpoVG (100 aa).

This sequence belongs to the SpoVG family.

Its function is as follows. Could be involved in septation. The protein is Putative septation protein SpoVG of Staphylococcus aureus (strain MRSA252).